A 69-amino-acid polypeptide reads, in one-letter code: ATP synthase protein 8 (69 aa).

The chain crosses the membrane as a helical span at residues 8 to 24 (TWTLTISLMIISLFCIY). Lys-55 carries the N6-acetyllysine; alternate modification. Lys-55 carries the post-translational modification N6-succinyllysine; alternate. N6-acetyllysine is present on Lys-58.

It belongs to the ATPase protein 8 family. As to quaternary structure, F-type ATPases have 2 components, CF(1) - the catalytic core - and CF(0) - the membrane proton channel. Component of an ATP synthase complex composed of ATP5PB, ATP5MC1, ATP5F1E, ATP5PD, ATP5ME, ATP5PF, ATP5MF, MT-ATP6, MT-ATP8, ATP5F1A, ATP5F1B, ATP5F1D, ATP5F1C, ATP5PO, ATP5MG, ATP5MK and ATP5MJ. Interacts with PRICKLE3.

It localises to the mitochondrion membrane. Functionally, mitochondrial membrane ATP synthase (F(1)F(0) ATP synthase or Complex V) produces ATP from ADP in the presence of a proton gradient across the membrane which is generated by electron transport complexes of the respiratory chain. F-type ATPases consist of two structural domains, F(1) - containing the extramembraneous catalytic core and F(0) - containing the membrane proton channel, linked together by a central stalk and a peripheral stalk. During catalysis, ATP synthesis in the catalytic domain of F(1) is coupled via a rotary mechanism of the central stalk subunits to proton translocation. Part of the complex F(0) domain. Minor subunit located with subunit a in the membrane. The polypeptide is ATP synthase protein 8 (MT-ATP8) (Didelphis virginiana (North American opossum)).